A 149-amino-acid chain; its full sequence is Putative pre-16S rRNA nuclease (149 aa).

This sequence belongs to the YqgF nuclease family.

It localises to the cytoplasm. Its function is as follows. Could be a nuclease involved in processing of the 5'-end of pre-16S rRNA. The protein is Putative pre-16S rRNA nuclease of Burkholderia lata (strain ATCC 17760 / DSM 23089 / LMG 22485 / NCIMB 9086 / R18194 / 383).